Consider the following 716-residue polypeptide: Mitogen-activated protein kinase kinase kinase 5 (716 aa).

Over residues 1–27 (MRWLPQISFSSPSSSPSSSLKPVASYS) the composition is skewed to low complexity. Disordered regions lie at residues 1–42 (MRWL…DRFH), 74–98 (ASTSSSTFDSGLTRSPSAFTAVPRS), 119–180 (AANA…YWVN), and 238–302 (YDIT…VTNG). Basic and acidic residues predominate over residues 31–40 (DPDRNQDRDR). Over residues 75–91 (STSSSTFDSGLTRSPSA) the composition is skewed to polar residues. The span at 124–137 (GLDDRDRDPERLIS) shows a compositional bias: basic and acidic residues. Composition is skewed to polar residues over residues 138–150 (DRTSSGPPLTSVN), 162–173 (ENSSYQDFSPRN), and 242–251 (AFSTDNSPIH). Positions 263-273 (RSPQPSRPSSP) are enriched in low complexity. The region spanning 346–607 (WKKGKLIGRG…ASMLLEHRFL (262 aa)) is the Protein kinase domain. ATP-binding positions include 352–360 (IGRGTFGSV) and K375. The active-site Proton acceptor is the D472. A compositionally biased stretch (polar residues) spans 610–633 (SLQPTSPSNSDVSQLFNGMNITEP). A disordered region spans residues 610–716 (SLQPTSPSNS…RRTGVTSDHL (107 aa)). Phosphoserine; by PBL27 occurs at positions 617 and 622. Residues 634 to 648 (SSRREKPNFKLDQVP) are compositionally biased toward basic and acidic residues. 2 stretches are compositionally biased toward polar residues: residues 652-661 (NMTSSESESG) and 674-685 (LTGTVNRLSPRS). Phosphoserine; by PBL27 is present on residues S658 and S660. T677 is modified (phosphothreonine; by PBL27). A Phosphoserine; by PBL27 modification is found at S685. Basic and acidic residues predominate over residues 703-716 (SSDRRRTGVTSDHL).

This sequence belongs to the protein kinase superfamily. STE Ser/Thr protein kinase family. MAP kinase kinase kinase subfamily. Interacts with PBL27 at the plasma membrane; disassociation is induced by chitin perception by the CERK1 complex. Interacts with MKK2, MKK4, and MKK5 mainly in the cytosol. In terms of processing, phosphorylated by PBL27 during chitin-mediated signaling in a CERK1-dependent manner. As to expression, mostly expressed in flower buds. Also present in pollen, roots, leaves and seedlings, and, at low levels, in stems and immature siliques.

The protein localises to the cell membrane. The protein resides in the cytoplasm. Its subcellular location is the cytosol. It catalyses the reaction L-seryl-[protein] + ATP = O-phospho-L-seryl-[protein] + ADP + H(+). The catalysed reaction is L-threonyl-[protein] + ATP = O-phospho-L-threonyl-[protein] + ADP + H(+). Functionally, mitogen-activated protein kinase (MAPK) involved in the transduction of signal between the host cell surface chitin receptor complex CERK1-LYK5 and the intracellular MAPK cascade that leads to chitin-induced immunity. Phosphorylates and activates MAPK targets (e.g. MKK4, MKK5, and possibly MKK2) when phosphorylated by PBL27 after elicitation by chitin. Required for resistance to the fungus A.brassicicola. In Arabidopsis thaliana (Mouse-ear cress), this protein is Mitogen-activated protein kinase kinase kinase 5.